The chain runs to 449 residues: Glutamate--tRNA ligase 1 (449 aa).

The 'HIGH' region motif lies at 11-21; that stretch reads PSPTGSLHVGN. The 'KMSKS' region signature appears at 242 to 246; sequence PLSKR. K245 lines the ATP pocket.

The protein belongs to the class-I aminoacyl-tRNA synthetase family. Glutamate--tRNA ligase type 1 subfamily. As to quaternary structure, monomer.

Its subcellular location is the cytoplasm. It carries out the reaction tRNA(Glu) + L-glutamate + ATP = L-glutamyl-tRNA(Glu) + AMP + diphosphate. Catalyzes the attachment of glutamate to tRNA(Glu) in a two-step reaction: glutamate is first activated by ATP to form Glu-AMP and then transferred to the acceptor end of tRNA(Glu). This chain is Glutamate--tRNA ligase 1, found in Parvibaculum lavamentivorans (strain DS-1 / DSM 13023 / NCIMB 13966).